We begin with the raw amino-acid sequence, 336 residues long: 4-hydroxy-3-methylbut-2-enyl diphosphate reductase (336 aa).

C32 contributes to the [4Fe-4S] cluster binding site. Residues H61 and H94 each contribute to the (2E)-4-hydroxy-3-methylbut-2-enyl diphosphate site. Dimethylallyl diphosphate-binding residues include H61 and H94. The isopentenyl diphosphate site is built by H61 and H94. C116 serves as a coordination point for [4Fe-4S] cluster. H148 lines the (2E)-4-hydroxy-3-methylbut-2-enyl diphosphate pocket. H148 contributes to the dimethylallyl diphosphate binding site. H148 serves as a coordination point for isopentenyl diphosphate. E150 acts as the Proton donor in catalysis. T189 is a binding site for (2E)-4-hydroxy-3-methylbut-2-enyl diphosphate. Residue C219 coordinates [4Fe-4S] cluster. The (2E)-4-hydroxy-3-methylbut-2-enyl diphosphate site is built by S247, S248, N249, and S292. Residues S247, S248, N249, and S292 each contribute to the dimethylallyl diphosphate site. Isopentenyl diphosphate is bound by residues S247, S248, N249, and S292.

It belongs to the IspH family. The cofactor is [4Fe-4S] cluster.

The enzyme catalyses isopentenyl diphosphate + 2 oxidized [2Fe-2S]-[ferredoxin] + H2O = (2E)-4-hydroxy-3-methylbut-2-enyl diphosphate + 2 reduced [2Fe-2S]-[ferredoxin] + 2 H(+). The catalysed reaction is dimethylallyl diphosphate + 2 oxidized [2Fe-2S]-[ferredoxin] + H2O = (2E)-4-hydroxy-3-methylbut-2-enyl diphosphate + 2 reduced [2Fe-2S]-[ferredoxin] + 2 H(+). Its pathway is isoprenoid biosynthesis; dimethylallyl diphosphate biosynthesis; dimethylallyl diphosphate from (2E)-4-hydroxy-3-methylbutenyl diphosphate: step 1/1. It participates in isoprenoid biosynthesis; isopentenyl diphosphate biosynthesis via DXP pathway; isopentenyl diphosphate from 1-deoxy-D-xylulose 5-phosphate: step 6/6. In terms of biological role, catalyzes the conversion of 1-hydroxy-2-methyl-2-(E)-butenyl 4-diphosphate (HMBPP) into a mixture of isopentenyl diphosphate (IPP) and dimethylallyl diphosphate (DMAPP). Acts in the terminal step of the DOXP/MEP pathway for isoprenoid precursor biosynthesis. The sequence is that of 4-hydroxy-3-methylbut-2-enyl diphosphate reductase from Gluconobacter oxydans (strain 621H) (Gluconobacter suboxydans).